An 891-amino-acid polypeptide reads, in one-letter code: DNA mismatch repair protein MutS (891 aa).

643–650 serves as a coordination point for ATP; it reads GPNMGGKS.

Belongs to the DNA mismatch repair MutS family.

This protein is involved in the repair of mismatches in DNA. It is possible that it carries out the mismatch recognition step. This protein has a weak ATPase activity. The sequence is that of DNA mismatch repair protein MutS from Xanthomonas campestris pv. campestris (strain ATCC 33913 / DSM 3586 / NCPPB 528 / LMG 568 / P 25).